The chain runs to 318 residues: CRISPR-associated protein Cas7/Csa2 1 (318 aa).

This sequence belongs to the CRISPR-associated protein Cas7/Cst2/DevR family. Subtype I-a/Apern subfamily. As to quaternary structure, part of the aCascade ribonucleoprotein complex, minimally composed of Csa2 and Cas5a, which binds crRNA. Other possible components of aCascade in strain P1 are Cas6b (SSO1437) and Csa5 (SSO1443), while SSO1399, Cas5b (SSO1400) and SSO1401 have sometimes been seen weakly associated. Csa2 is probably the major RNA-binding subunit. The Csa2-Cas5a-crRNA complex also binds target DNA homologous to crRNA, probably forming an R-loop. Purified aCascade forms a filament about 6 nm in width.

Functionally, CRISPR (clustered regularly interspaced short palindromic repeat) is an adaptive immune system that provides protection against mobile genetic elements (viruses, transposable elements and conjugative plasmids). CRISPR clusters contain spacers, sequences complementary to antecedent mobile elements, and target invading nucleic acids. CRISPR clusters are transcribed and processed into CRISPR RNA (crRNA). The chain is CRISPR-associated protein Cas7/Csa2 1 (cas7a) from Saccharolobus solfataricus (strain ATCC 35092 / DSM 1617 / JCM 11322 / P2) (Sulfolobus solfataricus).